A 702-amino-acid polypeptide reads, in one-letter code: Lipase maturation factor 2 (702 aa).

10 helical membrane-spanning segments follow: residues 10 to 30 (LFLQGVAAVYLFAFASLYTQI), 75 to 95 (AQGLDLLTLLGTVLALGALLL), 102 to 122 (FIYLLLWAAYLSACQVGQVFL), 123 to 143 (YFQWDSLLLETGFLAILVAPL), 164 to 184 (DLPFWLVRWLLFRLMFASGVV), 226 to 246 (LSVVATFLIEIAVPPLFFAPI), 259 to 279 (LLQILIIITGNYNFFNLLTLV), 316 to 336 (LMLELTVYGLLAYGTIYYFGL), 363 to 383 (VTLPTVWLGTASLAWELLIAL), and 396 to 416 (FFAGIQLSVLGTATVFLFLIS). The N-linked (GlcNAc...) asparagine glycan is linked to Asn-488. A helical membrane pass occupies residues 628–648 (QLSPLEPSILLWGLLGAVVAI). Residues 660 to 702 (LQSSKQTREEKRKQAPKKDSRAVSEQTAPNSNSNGSWAPRRKK) form a disordered region. The segment covering 665-681 (QTREEKRKQAPKKDSRA) has biased composition (basic and acidic residues). A compositionally biased stretch (polar residues) spans 682–695 (VSEQTAPNSNSNGS).

It belongs to the lipase maturation factor family.

The protein localises to the endoplasmic reticulum membrane. Functionally, involved in the maturation of specific proteins in the endoplasmic reticulum. May be required for maturation and transport of active lipoprotein lipase (LPL) through the secretory pathway. The chain is Lipase maturation factor 2 (Lmf2) from Rattus norvegicus (Rat).